Reading from the N-terminus, the 670-residue chain is WD repeat-containing protein 48 homolog (670 aa).

7 WD repeats span residues 13-52, 59-98, 101-140, 152-191, 194-233, 236-275, and 278-317; these read RHRN…SQEP, HHND…CMST, THRD…ALTA, GSKD…KIAK, GHTE…CIQT, VHSE…NSVL, and EERA…KLSN. The segment at 321 to 348 is disordered; the sequence is SSNSSINSGGGGDGTPVTNSASNATPAS. Low complexity predominate over residues 338–348; the sequence is TNSASNATPAS. The stretch at 359 to 398 is one WD 8 repeat; the sequence is KGGAAIKKYHVLNDKRFMLTKDSEQNVAIYDVLKVKKVED. The segment covering 613–625 has biased composition (gly residues); that stretch reads GGGGGSSTGGGGN. The disordered stretch occupies residues 613-645; it reads GGGGGSSTGGGGNSNSSQNNSQSDANSEGSQVP. Residues 626-635 are compositionally biased toward low complexity; that stretch reads SNSSQNNSQS.

It belongs to the WD repeat WDR48 family. As to quaternary structure, catalytic component of the Usp12-46 deubiquitylase complex consisting of Usp12-46, Wdr20 and Uaf1; regulatory subunit that, together wtih Wdr20, stabilizes Usp12-46. The Usp12-46 deubiquitylase complex associates with arr/arrow; the interaction leads to deubiquitination and stabilization of arr/arrow.

Its function is as follows. Regulatory component of the Usp12-46 deubiquitylase complex. activates deubiquitination by increasing the catalytic turnover without increasing the affinity of deubiquitinating enzymes for the substrate. The complex deubiquitylates the wg/wingless-signaling receptor arr/arrow, which stabilizes the receptor and increases its concentration at the cell surface; this enhances the sensitivity of cells to wg/wingless-signal stimulation. This increases the amplitude and spatial range of the signaling response to the wg/wingless morphogen gradient, facilitating the precise concentration-dependent regulation of its target genes. Together with Wdr20 and Usp12-46 required for wg/wingless-mediated signaling in the wing imaginal disc and for wg/wingless-dependent regulation of intestinal stem cell proliferation. The sequence is that of WD repeat-containing protein 48 homolog from Culex quinquefasciatus (Southern house mosquito).